The chain runs to 255 residues: Acetylglutamate kinase (255 aa).

Substrate is bound by residues 40–41 (GG), Arg62, and Asn153.

This sequence belongs to the acetylglutamate kinase family. ArgB subfamily.

It localises to the cytoplasm. The catalysed reaction is N-acetyl-L-glutamate + ATP = N-acetyl-L-glutamyl 5-phosphate + ADP. Its pathway is amino-acid biosynthesis; L-arginine biosynthesis; N(2)-acetyl-L-ornithine from L-glutamate: step 2/4. Functionally, catalyzes the ATP-dependent phosphorylation of N-acetyl-L-glutamate. The polypeptide is Acetylglutamate kinase (Bacillus cereus (strain AH187)).